Reading from the N-terminus, the 385-residue chain is Acetylornithine deacetylase (385 aa).

His80 contributes to the Zn(2+) binding site. The active site involves Asp82. Zn(2+) is bound at residue Asp112. Glu144 acts as the Proton acceptor in catalysis. 3 residues coordinate Zn(2+): Glu145, Glu169, and His355.

Belongs to the peptidase M20A family. ArgE subfamily. As to quaternary structure, homodimer. Zn(2+) serves as cofactor. It depends on Co(2+) as a cofactor. Glutathione is required as a cofactor.

It is found in the cytoplasm. The enzyme catalyses N(2)-acetyl-L-ornithine + H2O = L-ornithine + acetate. Its pathway is amino-acid biosynthesis; L-arginine biosynthesis; L-ornithine from N(2)-acetyl-L-ornithine (linear): step 1/1. Catalyzes the hydrolysis of the amide bond of N(2)-acetylated L-amino acids. Cleaves the acetyl group from N-acetyl-L-ornithine to form L-ornithine, an intermediate in L-arginine biosynthesis pathway, and a branchpoint in the synthesis of polyamines. This Photorhabdus laumondii subsp. laumondii (strain DSM 15139 / CIP 105565 / TT01) (Photorhabdus luminescens subsp. laumondii) protein is Acetylornithine deacetylase.